The sequence spans 495 residues: Ribose import ATP-binding protein RbsA 3 (495 aa).

ABC transporter domains follow at residues 5-240 (VRLR…VGRE) and 250-492 (AEIG…TGVK). 37–44 (GENGAGKS) provides a ligand contact to ATP.

This sequence belongs to the ABC transporter superfamily. Ribose importer (TC 3.A.1.2.1) family. The complex is composed of an ATP-binding protein (RbsA), two transmembrane proteins (RbsC) and a solute-binding protein (RbsB).

It localises to the cell membrane. The enzyme catalyses D-ribose(out) + ATP + H2O = D-ribose(in) + ADP + phosphate + H(+). Functionally, part of the ABC transporter complex RbsABC involved in ribose import. Responsible for energy coupling to the transport system. This is Ribose import ATP-binding protein RbsA 3 from Rubrobacter xylanophilus (strain DSM 9941 / JCM 11954 / NBRC 16129 / PRD-1).